Consider the following 187-residue polypeptide: Large ribosomal subunit protein uL5 (187 aa).

It belongs to the universal ribosomal protein uL5 family. Part of the 50S ribosomal subunit; part of the 5S rRNA/L5/L18/L25 subcomplex. Contacts the 5S rRNA and the P site tRNA. Forms a bridge to the 30S subunit in the 70S ribosome.

Its function is as follows. This is one of the proteins that bind and probably mediate the attachment of the 5S RNA into the large ribosomal subunit, where it forms part of the central protuberance. In the 70S ribosome it contacts protein S13 of the 30S subunit (bridge B1b), connecting the 2 subunits; this bridge is implicated in subunit movement. Contacts the P site tRNA; the 5S rRNA and some of its associated proteins might help stabilize positioning of ribosome-bound tRNAs. This chain is Large ribosomal subunit protein uL5, found in Mycobacterium avium (strain 104).